Consider the following 49-residue polypeptide: Photosystem I reaction center subunit IX (49 aa).

A helical transmembrane segment spans residues 14–34 (FISTAPVAATIWLTITAGILI).

This sequence belongs to the PsaJ family.

The protein resides in the cellular thylakoid membrane. May help in the organization of the PsaE and PsaF subunits. In Nostoc punctiforme (strain ATCC 29133 / PCC 73102), this protein is Photosystem I reaction center subunit IX.